The chain runs to 538 residues: Syncytin-1 (538 aa).

Residues 1 to 20 (MALPYHIFLFTVLLPSFTLT) form the signal peptide. The Extracellular segment spans residues 21 to 443 (APPPCRCMTS…NTGPWGLLSQ (423 aa)). N-linked (GlcNAc...) asparagine glycosylation is present at Asn-169. The short motif at 186-189 (CWIC) is the CXXC element. Intrachain disulfides connect Cys-186–Cys-189, Cys-186–Cys-405, and Cys-397–Cys-404. Residues Asn-208, Asn-214, Asn-234, Asn-242, and Asn-281 are each glycosylated (N-linked (GlcNAc...) asparagine). The interval 320-340 (ILPFVIGAGVLGALGTGIGGI) is fusion peptide. Residues 380 to 396 (LQNRRALDLLTAERGGT) are immunosuppression. Residues 397-406 (CLFLGEECCY) carry the CX6CC motif. A glycan (N-linked (GlcNAc...) asparagine) is linked at Asn-409. A helical membrane pass occupies residues 444-464 (WMPWILPFLGPLAAIILLLLF). Positions 465–484 (GPCIFNLLVNFVSSRIEAVK) are essential for the fusiogenic function. The Cytoplasmic portion of the chain corresponds to 465–538 (GPCIFNLLVN…LLRPNSAGSS (74 aa)). The tract at residues 496-538 (KIYRRPLDRPASPRSDVNDIKGTPPEEISAAQPLLRPNSAGSS) is disordered.

It belongs to the gamma type-C retroviral envelope protein family. HERV class-I W env subfamily. As to quaternary structure, the mature envelope protein (Env) consists of a trimer of SU-TM heterodimers attached probably by a labile interchain disulfide bond. Interacts with the C-type lectin CD209/DC-SIGN. Specific enzymatic cleavages in vivo yield mature proteins. Envelope glycoproteins are synthesized as an inactive precursor that is heavily N-glycosylated and processed likely by furin in the Golgi to yield the mature SU and TM proteins. The cleavage site between SU and TM requires the minimal sequence [KR]-X-[KR]-R. The intracytoplasmic tail cleavage by the viral protease that is required for the fusiogenic activity of some retroviruses envelope proteins seems to have been lost during evolution. In terms of processing, the CXXC motif is highly conserved across a broad range of retroviral envelope proteins. It is thought to participate in the formation of a labile disulfide bond possibly with the CX6CC motif present in the transmembrane protein. Isomerization of the intersubunit disulfide bond to an SU intrachain disulfide bond is thought to occur upon receptor recognition in order to allow membrane fusion. As to expression, expressed at higher level in placental syncytiotrophoblast. Expressed at intermediate level in testis. Seems also to be found at low level in adrenal tissue, bone marrow, breast, colon, kidney, ovary, prostate, skin, spleen, thymus, thyroid, brain and trachea. Both mRNA and protein levels are significantly increased in the brain of individuals with multiple sclerosis, particularly in astrocytes and microglia.

The protein localises to the cell membrane. It localises to the virion. This endogenous retroviral envelope protein has retained its original fusogenic properties and participates in trophoblast fusion and the formation of a syncytium during placenta morphogenesis. May induce fusion through binding of SLC1A4 and SLC1A5. Its function is as follows. Endogenous envelope proteins may have kept, lost or modified their original function during evolution. Retroviral envelope proteins mediate receptor recognition and membrane fusion during early infection. The surface protein (SU) mediates receptor recognition, while the transmembrane protein (TM) acts as a class I viral fusion protein. The protein may have at least 3 conformational states: pre-fusion native state, pre-hairpin intermediate state, and post-fusion hairpin state. During viral and target cell membrane fusion, the coiled coil regions (heptad repeats) assume a trimer-of-hairpins structure, positioning the fusion peptide in close proximity to the C-terminal region of the ectodomain. The formation of this structure appears to drive apposition and subsequent fusion of membranes. The sequence is that of Syncytin-1 (ERVW-1) from Homo sapiens (Human).